A 507-amino-acid chain; its full sequence is Chromosomal replication initiator protein DnaA (507 aa).

The domain I, interacts with DnaA modulators stretch occupies residues 1 to 112 (MTDDPGSGFT…PATDEADDTT (112 aa)). The tract at residues 99-155 (RIAPPATDEADDTTVPPSENPATTSPDTTTDNDEIDDSAAARGDNQHSWPSYFTERP) is disordered. Polar residues predominate over residues 113–127 (VPPSENPATTSPDTT). The segment at 113 to 166 (VPPSENPATTSPDTTTDNDEIDDSAAARGDNQHSWPSYFTERPHNTDSATAGVT) is domain II. The domain III, AAA+ region stretch occupies residues 167 to 383 (SLNRRYTFDT…GALIRVTAFA (217 aa)). G211, G213, K214, and T215 together coordinate ATP. Residues 384 to 507 (SLNKTPIDKA…TTRIRQRSKR (124 aa)) are domain IV, binds dsDNA.

It belongs to the DnaA family. As to quaternary structure, oligomerizes as a right-handed, spiral filament on DNA at oriC.

It localises to the cytoplasm. Its function is as follows. Plays an essential role in the initiation and regulation of chromosomal replication. ATP-DnaA binds to the origin of replication (oriC) to initiate formation of the DNA replication initiation complex once per cell cycle. Binds the DnaA box (a 9 base pair repeat at the origin) and separates the double-stranded (ds)DNA. Forms a right-handed helical filament on oriC DNA; dsDNA binds to the exterior of the filament while single-stranded (ss)DNA is stabiized in the filament's interior. The ATP-DnaA-oriC complex binds and stabilizes one strand of the AT-rich DNA unwinding element (DUE), permitting loading of DNA polymerase. After initiation quickly degrades to an ADP-DnaA complex that is not apt for DNA replication. Binds acidic phospholipids. The polypeptide is Chromosomal replication initiator protein DnaA (Mycobacterium tuberculosis (strain ATCC 25177 / H37Ra)).